A 115-amino-acid chain; its full sequence is Large ribosomal subunit protein bL20c (115 aa).

This sequence belongs to the bacterial ribosomal protein bL20 family.

The protein localises to the plastid. It localises to the chloroplast. Its function is as follows. Binds directly to 23S ribosomal RNA and is necessary for the in vitro assembly process of the 50S ribosomal subunit. It is not involved in the protein synthesizing functions of that subunit. The polypeptide is Large ribosomal subunit protein bL20c (Angiopteris evecta (Mule's foot fern)).